The primary structure comprises 338 residues: Glycerol-3-phosphate dehydrogenase [NAD(P)+] (338 aa).

NADPH is bound by residues Ser-11, Trp-12, His-32, Arg-33, and Lys-106. Positions 106, 137, and 139 each coordinate sn-glycerol 3-phosphate. Ala-141 serves as a coordination point for NADPH. 5 residues coordinate sn-glycerol 3-phosphate: Lys-192, Asp-245, Ser-255, Arg-256, and Asn-257. Lys-192 functions as the Proton acceptor in the catalytic mechanism. Arg-256 serves as a coordination point for NADPH. Val-280 and Glu-282 together coordinate NADPH.

Belongs to the NAD-dependent glycerol-3-phosphate dehydrogenase family.

The protein resides in the cytoplasm. It carries out the reaction sn-glycerol 3-phosphate + NAD(+) = dihydroxyacetone phosphate + NADH + H(+). It catalyses the reaction sn-glycerol 3-phosphate + NADP(+) = dihydroxyacetone phosphate + NADPH + H(+). It participates in membrane lipid metabolism; glycerophospholipid metabolism. Its function is as follows. Catalyzes the reduction of the glycolytic intermediate dihydroxyacetone phosphate (DHAP) to sn-glycerol 3-phosphate (G3P), the key precursor for phospholipid synthesis. The sequence is that of Glycerol-3-phosphate dehydrogenase [NAD(P)+] from Lysinibacillus sphaericus (strain C3-41).